We begin with the raw amino-acid sequence, 865 residues long: Alanine--tRNA ligase (865 aa).

Residues His-554, His-558, Cys-656, and His-660 each coordinate Zn(2+).

It belongs to the class-II aminoacyl-tRNA synthetase family. The cofactor is Zn(2+).

It is found in the cytoplasm. It catalyses the reaction tRNA(Ala) + L-alanine + ATP = L-alanyl-tRNA(Ala) + AMP + diphosphate. Functionally, catalyzes the attachment of alanine to tRNA(Ala) in a two-step reaction: alanine is first activated by ATP to form Ala-AMP and then transferred to the acceptor end of tRNA(Ala). Also edits incorrectly charged Ser-tRNA(Ala) and Gly-tRNA(Ala) via its editing domain. This chain is Alanine--tRNA ligase, found in Francisella tularensis subsp. tularensis (strain FSC 198).